Reading from the N-terminus, the 128-residue chain is Sirohydrochlorin cobaltochelatase (128 aa).

The Proton acceptor role is filled by histidine 9. Histidine 9 contributes to the Co(2+) binding site. Substrate contacts are provided by residues lysine 43 and 68 to 73 (FATGTH). Histidine 73 contributes to the Co(2+) binding site.

The protein belongs to the CbiX family. CbiXS subfamily. In terms of assembly, homotetramer; dimer of dimers.

The enzyme catalyses Co-sirohydrochlorin + 2 H(+) = sirohydrochlorin + Co(2+). It functions in the pathway cofactor biosynthesis; adenosylcobalamin biosynthesis; cob(II)yrinate a,c-diamide from sirohydrochlorin (anaerobic route): step 1/10. In terms of biological role, catalyzes the insertion of Co(2+) into sirohydrochlorin as part of the anaerobic pathway to cobalamin biosynthesis. In Saccharolobus solfataricus (strain ATCC 35092 / DSM 1617 / JCM 11322 / P2) (Sulfolobus solfataricus), this protein is Sirohydrochlorin cobaltochelatase.